Consider the following 96-residue polypeptide: MNVLKEVYSTIEKRIQEKPEGSYVAKLTTDDKKTAVNKICEKVGEEAAEVILAAKDNDKAEIIYESADLIFHTMVLLAKSGITYEELSEEFKKRMK.

The protein belongs to the PRA-PH family.

It is found in the cytoplasm. It carries out the reaction 1-(5-phospho-beta-D-ribosyl)-ATP + H2O = 1-(5-phospho-beta-D-ribosyl)-5'-AMP + diphosphate + H(+). Its pathway is amino-acid biosynthesis; L-histidine biosynthesis; L-histidine from 5-phospho-alpha-D-ribose 1-diphosphate: step 2/9. This chain is Phosphoribosyl-ATP pyrophosphatase, found in Methanococcus maripaludis (strain C6 / ATCC BAA-1332).